The primary structure comprises 706 residues: Glutamine-dependent NAD(+) synthetase (706 aa).

A CN hydrolase domain is found at 5–275 (VTVATCALNQ…VEVLTATLDL (271 aa)). Glu45 functions as the Proton acceptor; for glutaminase activity in the catalytic mechanism. Lys114 acts as the For glutaminase activity in catalysis. Cys175 acts as the Nucleophile; for glutaminase activity in catalysis. The interval 325 to 706 (YHSPEEEISL…AAPQSLDGVD (382 aa)) is ligase. An ATP-binding site is contributed by 355-362 (PLSGGVDS). The active site involves Ser357.

This sequence in the C-terminal section; belongs to the NAD synthetase family. Homohexamer.

The enzyme catalyses deamido-NAD(+) + L-glutamine + ATP + H2O = L-glutamate + AMP + diphosphate + NAD(+) + H(+). The protein operates within cofactor biosynthesis; NAD(+) biosynthesis; NAD(+) from deamido-NAD(+) (L-Gln route): step 1/1. Catalyzes the final step of the nicotinamide adenine dinucleotide (NAD) de novo synthesis pathway, the ATP-dependent amidation of deamido-NAD using L-glutamine as a nitrogen source. The polypeptide is Glutamine-dependent NAD(+) synthetase (NADSYN1) (Macaca fascicularis (Crab-eating macaque)).